The sequence spans 393 residues: Acetylornithine aminotransferase (393 aa).

Residues 100 to 101 (GA) and Phe-133 contribute to the pyridoxal 5'-phosphate site. N(2)-acetyl-L-ornithine is bound at residue Arg-136. Residue 218 to 221 (DEVQ) participates in pyridoxal 5'-phosphate binding. At Lys-247 the chain carries N6-(pyridoxal phosphate)lysine. N(2)-acetyl-L-ornithine is bound at residue Ser-274. Thr-275 is a binding site for pyridoxal 5'-phosphate.

It belongs to the class-III pyridoxal-phosphate-dependent aminotransferase family. ArgD subfamily. In terms of assembly, homodimer. Requires pyridoxal 5'-phosphate as cofactor.

The protein resides in the cytoplasm. It catalyses the reaction N(2)-acetyl-L-ornithine + 2-oxoglutarate = N-acetyl-L-glutamate 5-semialdehyde + L-glutamate. It functions in the pathway amino-acid biosynthesis; L-arginine biosynthesis; N(2)-acetyl-L-ornithine from L-glutamate: step 4/4. The polypeptide is Acetylornithine aminotransferase (Caldanaerobacter subterraneus subsp. tengcongensis (strain DSM 15242 / JCM 11007 / NBRC 100824 / MB4) (Thermoanaerobacter tengcongensis)).